A 1464-amino-acid chain; its full sequence is Collagen alpha-1(III) chain (1464 aa).

Residues 1–23 form the signal peptide; that stretch reads MMSFVQSGTWFLLTLLHPTLILA. Residues 24 to 154 constitute a propeptide, N-terminal propeptide; it reads QQSNVDELGC…CPTGGQNYSP (131 aa). A VWFC domain is found at 31–90; that stretch reads LGCSHLGQSYESRDVWKPEPCQICVCDSGSVLCDDIICDEEPLDCPNPEIPFGECCAICP. Positions 97 to 1195 are disordered; that stretch reads PVLPDGHGPQ…PGPPGAPGPC (1099 aa). Residues 100-109 show a composition bias toward low complexity; the sequence is PDGHGPQGPK. Over residues 147-156 the composition is skewed to polar residues; the sequence is TGGQNYSPQF. The tract at residues 155 to 169 is nonhelical region (N-terminal); the sequence is QFDSYDVKSGVGGMG. Residues 164–173 show a composition bias toward gly residues; sequence GVGGMGGYPG. The interval 170–1195 is triple-helical region; the sequence is GYPGPAGPPG…PGPPGAPGPC (1026 aa). Residues 174-184 show a composition bias toward pro residues; sequence PAGPPGPPGPP. The span at 186-198 shows a compositional bias: low complexity; sequence SSGHPGSPGSPGY. A compositionally biased stretch (basic and acidic residues) spans 228 to 240; that stretch reads KDGESGRPGRPGE. Lys-262 bears the 5-hydroxylysine; alternate mark. A glycan (O-linked (Gal...) hydroxylysine; alternate) is linked at Lys-262. The segment covering 265 to 276 has biased composition (basic and acidic residues); it reads RGFDGRNGEKGE. Lys-283 bears the 5-hydroxylysine mark. Low complexity-rich tracts occupy residues 310-321 and 354-379; these read PGLPGAAGARGN and PAGS…AGAQ. The span at 389-398 shows a compositional bias: gly residues; the sequence is GSPGGKGEMG. Low complexity predominate over residues 399–412; sequence PAGIPGAPGLIGAR. Residues 527–548 are compositionally biased toward gly residues; sequence GTPGGPGIRGMPGSPGGPGNDG. Residues 606–615 are compositionally biased toward low complexity; the sequence is PAGKNGETGP. 2 stretches are compositionally biased toward gly residues: residues 641 to 650 and 668 to 677; these read GIPGTGGPPG and GAPGGKGDSG. Positions 678–691 are enriched in low complexity; the sequence is APGERGPPGTAGIP. Positions 692-708 are enriched in gly residues; it reads GARGGAGPPGPEGGKGP. Positions 717–727 are enriched in low complexity; the sequence is ASGSPGLQGMP. Residues 822 to 834 show a composition bias toward basic and acidic residues; the sequence is AKGERGAPGEKGE. Position 859 is a 5-hydroxylysine (Lys-859). Gly residues predominate over residues 863 to 879; sequence GSPGGPGTAGFPGGRGL. The span at 889–906 shows a compositional bias: pro residues; it reads PGPPGPSGAPGKDGPPGP. Low complexity-rich tracts occupy residues 907–934 and 945–960; these read AGNS…KGPP and PLGI…LAGP. Lys-976 carries the post-translational modification 5-hydroxylysine. Pro residues predominate over residues 1045 to 1054; the sequence is PGHPGPPGPV. A compositionally biased stretch (low complexity) spans 1068–1084; that stretch reads PAGPSGAPGPAGARGAP. A 5-hydroxylysine mark is found at Lys-1093 and Lys-1105. A compositionally biased stretch (low complexity) spans 1120 to 1132; the sequence is PGAAGHQGAIGSP. Pro residues predominate over residues 1180 to 1192; the sequence is PGQPGPPGPPGAP. Positions 1220–1464 are cleaved as a propeptide — C-terminal propeptide; sequence DDPMDFKINT…GVDIGPVCFL (245 aa). Residues 1230-1464 enclose the Fibrillar collagen NC1 domain; the sequence is EEIMSSLKSV…GVDIGPVCFL (235 aa). 3 cysteine pairs are disulfide-bonded: Cys-1260–Cys-1292, Cys-1300–Cys-1462, and Cys-1370–Cys-1415. Asp-1278, Asn-1280, Gln-1281, Cys-1283, and Asp-1286 together coordinate Ca(2+).

The protein belongs to the fibrillar collagen family. In terms of assembly, trimers of identical alpha 1(III) chains. The chains are linked to each other by interchain disulfide bonds. Trimers are also cross-linked via hydroxylysines. Interacts with ADGRG1. Post-translationally, proline residues at the third position of the tripeptide repeating unit (G-X-Y) are hydroxylated in some or all of the chains. O-linked glycan consists of a Glc-Gal disaccharide bound to the oxygen atom of a post-translationally added hydroxyl group. In terms of tissue distribution, expressed in embryonic brain, specifically in the meninges, pial basement membrane and blood vessels (at protein level).

The protein localises to the secreted. Its subcellular location is the extracellular space. It localises to the extracellular matrix. In terms of biological role, collagen type III occurs in most soft connective tissues along with type I collagen. Involved in regulation of cortical development. Is the major ligand of ADGRG1 in the developing brain and binding to ADGRG1 inhibits neuronal migration and activates the RhoA pathway by coupling ADGRG1 to GNA13 and possibly GNA12. This is Collagen alpha-1(III) chain (Col3a1) from Mus musculus (Mouse).